Here is an 879-residue protein sequence, read N- to C-terminus: DNA methyltransferase A (879 aa).

Belongs to the methyltransferase superfamily.

It carries out the reaction a 2'-deoxyadenosine in DNA + S-adenosyl-L-methionine = an N(6)-methyl-2'-deoxyadenosine in DNA + S-adenosyl-L-homocysteine + H(+). Its function is as follows. Recognizes the double-stranded sequence 5'-GACGAG-3' and methylates A-5, yielding m6A. m6A methylation functions as a transcriptional modifier, promoting transcription of a number of genes (at least scpA, hbs, rnhC, yumC and zapA). One studied mechanism is via transcriptional repressor ScoC (also called hpr) which binds to non-methylated scpA promoter; when the m6A target is methylated ScoC no longer binds and scpA transcription is up-regulated. Other mechanisms for gene expression regulation probably exist. Binds DNA with and without the target sequence. Although it resembles a restriction-modification system, it does not have detectable endonuclease activity under tested conditions. A gamma subtype methylase. This chain is DNA methyltransferase A, found in Bacillus subtilis (strain 168).